Reading from the N-terminus, the 852-residue chain is Probable inorganic carbon transporter subunit DabA (852 aa).

Residues Cys-370, Asp-372, His-554, and Cys-569 each coordinate Zn(2+).

This sequence belongs to the inorganic carbon transporter (TC 9.A.2) DabA family. Forms a complex with DabB. It depends on Zn(2+) as a cofactor.

The protein resides in the cell inner membrane. Its function is as follows. Part of an energy-coupled inorganic carbon pump. The protein is Probable inorganic carbon transporter subunit DabA of Novosphingobium aromaticivorans (strain ATCC 700278 / DSM 12444 / CCUG 56034 / CIP 105152 / NBRC 16084 / F199).